We begin with the raw amino-acid sequence, 509 residues long: Coiled-coil domain-containing protein 181 (509 aa).

The span at 60-82 shows a compositional bias: basic and acidic residues; the sequence is EHTKQHSDPDKSLQDDVSPRRND. Disordered stretches follow at residues 60-121 and 285-367; these read EHTK…EEDE and GEPL…EEKE. Positions 320-334 are enriched in polar residues; the sequence is RTQSARISPVTSTYC. Residues 335–375 adopt a coiled-coil conformation; the sequence is LSPRQKELQKQLEQKREKLKREEEQRKIEEEKEKKRENDIV. The segment covering 338–367 has biased composition (basic and acidic residues); sequence RQKELQKQLEQKREKLKREEEQRKIEEEKE.

The protein belongs to the CCDC181 family. In terms of assembly, homodimer. Interacts with HOOK1. Interacts with HOOK2. Interacts with HOOK3.

It is found in the cytoplasm. Its subcellular location is the cytoskeleton. It localises to the cell projection. The protein localises to the cilium. The protein resides in the flagellum. Its function is as follows. Microtubule-binding protein that localizes to the microtubular manchette of elongating spermatids. In Macaca fascicularis (Crab-eating macaque), this protein is Coiled-coil domain-containing protein 181.